Reading from the N-terminus, the 210-residue chain is Imidazoleglycerol-phosphate dehydratase (210 aa).

The tract at residues 185 to 210 (PRRGGSIPSSKGVLEQAGDNNTEKSK) is disordered.

Belongs to the imidazoleglycerol-phosphate dehydratase family.

The protein resides in the cytoplasm. It catalyses the reaction D-erythro-1-(imidazol-4-yl)glycerol 3-phosphate = 3-(imidazol-4-yl)-2-oxopropyl phosphate + H2O. Its pathway is amino-acid biosynthesis; L-histidine biosynthesis; L-histidine from 5-phospho-alpha-D-ribose 1-diphosphate: step 6/9. The sequence is that of Imidazoleglycerol-phosphate dehydratase from Prochlorococcus marinus (strain SARG / CCMP1375 / SS120).